Reading from the N-terminus, the 185-residue chain is Ribosome-recycling factor (185 aa).

The protein belongs to the RRF family.

It is found in the cytoplasm. In terms of biological role, responsible for the release of ribosomes from messenger RNA at the termination of protein biosynthesis. May increase the efficiency of translation by recycling ribosomes from one round of translation to another. The sequence is that of Ribosome-recycling factor from Corynebacterium jeikeium (strain K411).